The following is a 198-amino-acid chain: Protein C4 (198 aa).

Positions 1–36 (MFNPRHPGGEFFGRKHHRRHAPDGRSSSSSSSSSEC) are disordered.

This chain is Protein C4 (C4), found in Giardia intestinalis (Giardia lamblia).